The following is a 414-amino-acid chain: Glucose-6-phosphate isomerase (414 aa).

Catalysis depends on Glu266, which acts as the Proton donor. Catalysis depends on residues His292 and Lys405.

It belongs to the GPI family.

The protein localises to the cytoplasm. The enzyme catalyses alpha-D-glucose 6-phosphate = beta-D-fructose 6-phosphate. Its pathway is carbohydrate biosynthesis; gluconeogenesis. It participates in carbohydrate degradation; glycolysis; D-glyceraldehyde 3-phosphate and glycerone phosphate from D-glucose: step 2/4. In terms of biological role, catalyzes the reversible isomerization of glucose-6-phosphate to fructose-6-phosphate. The polypeptide is Glucose-6-phosphate isomerase (Thermus thermophilus (strain ATCC BAA-163 / DSM 7039 / HB27)).